Consider the following 229-residue polypeptide: Ferric nitrobindin-like protein (229 aa).

Positions 1–54 (MSENSTPNNPVVPGAGADGPSLSDSASISGSDAVNLAAEQSKSTAHRNIPGLGD) are disordered. A compositionally biased stretch (low complexity) spans 18–33 (DGPSLSDSASISGSDA). A GXWXGXG motif is present at residues 82–88 (GVWRGEG).

Belongs to the nitrobindin family.

This is Ferric nitrobindin-like protein from Corynebacterium glutamicum (strain R).